The following is a 221-amino-acid chain: 5-methylthioribulose-1-phosphate/5-deoxyribulose-1-phosphate aldolase (221 aa).

The active-site Proton donor/acceptor is glutamate 75. Residues glutamate 75, histidine 94, histidine 96, and histidine 157 each coordinate Co(2+).

It belongs to the aldolase class II family. It depends on Co(2+) as a cofactor.

It catalyses the reaction 5-(methylsulfanyl)-D-ribulose 1-phosphate = 2-(methylsulfanyl)acetaldehyde + dihydroxyacetone phosphate. The enzyme catalyses 5-deoxy-D-ribulose 1-phosphate = dihydroxyacetone phosphate + acetaldehyde. The protein operates within amino-acid biosynthesis; L-methionine biosynthesis via salvage pathway. Functionally, uses 5-methylthioribulose-1-phosphate to yield 2-(methylthio)acetaldehyde and dihydroxyacetone phosphate. Can also use 5-deoxyribulose 1-phosphate to yield acetaldehyde and dihydroxyacetone phosphate. Part of a bifunctional DHAP-shunt salvage pathway for SAM by-products. This is 5-methylthioribulose-1-phosphate/5-deoxyribulose-1-phosphate aldolase from Rhodospirillum rubrum (strain ATCC 11170 / ATH 1.1.1 / DSM 467 / LMG 4362 / NCIMB 8255 / S1).